Reading from the N-terminus, the 167-residue chain is Intermembrane phospholipid transport system binding protein MlaD (167 aa).

The Cytoplasmic portion of the chain corresponds to 1–6; sequence MRQTIK. The chain crosses the membrane as a helical; Signal-anchor for type II membrane protein span at residues 7–27; the sequence is YEFWVGLFLLLGIGALVFLGL. Topologically, residues 28–167 are periplasmic; sequence RVANVQGFAE…GNEKSESTEQ (140 aa). An MCE/MlaD region spans residues 40–118; that stretch reads SYTVTATFDN…GEQYIALTMG (79 aa).

Belongs to the MlaD family. As to quaternary structure, the complex is composed of two ATP-binding proteins (MlaF), two transmembrane proteins (MlaE), two cytoplasmic solute-binding proteins (MlaB) and six periplasmic solute-binding proteins (MlaD).

Its subcellular location is the cell inner membrane. Its function is as follows. Part of the ABC transporter complex MlaFEDB, which is involved in a phospholipid transport pathway that maintains lipid asymmetry in the outer membrane by retrograde trafficking of phospholipids from the outer membrane to the inner membrane. MlaD functions in substrate binding with strong affinity for phospholipids and modulates ATP hydrolytic activity of the complex. This Haemophilus influenzae (strain ATCC 51907 / DSM 11121 / KW20 / Rd) protein is Intermembrane phospholipid transport system binding protein MlaD.